A 360-amino-acid polypeptide reads, in one-letter code: Phospho-N-acetylmuramoyl-pentapeptide-transferase (360 aa).

The next 10 helical transmembrane spans lie at 25–45 (RGIL…PWMI), 73–93 (TMGG…WADL), 97–117 (YVWV…VDDY), 132–152 (WKYF…YMTA), 168–188 (VSIP…VGSS), 199–219 (GLAI…CYLS), 236–256 (AGEL…FLWF), 263–283 (VFMG…IAVI), 288–308 (IVLF…VIQV), and 338–358 (VIVR…ATLK).

It belongs to the glycosyltransferase 4 family. MraY subfamily. It depends on Mg(2+) as a cofactor.

Its subcellular location is the cell inner membrane. It catalyses the reaction UDP-N-acetyl-alpha-D-muramoyl-L-alanyl-gamma-D-glutamyl-meso-2,6-diaminopimeloyl-D-alanyl-D-alanine + di-trans,octa-cis-undecaprenyl phosphate = di-trans,octa-cis-undecaprenyl diphospho-N-acetyl-alpha-D-muramoyl-L-alanyl-D-glutamyl-meso-2,6-diaminopimeloyl-D-alanyl-D-alanine + UMP. The protein operates within cell wall biogenesis; peptidoglycan biosynthesis. Catalyzes the initial step of the lipid cycle reactions in the biosynthesis of the cell wall peptidoglycan: transfers peptidoglycan precursor phospho-MurNAc-pentapeptide from UDP-MurNAc-pentapeptide onto the lipid carrier undecaprenyl phosphate, yielding undecaprenyl-pyrophosphoryl-MurNAc-pentapeptide, known as lipid I. This chain is Phospho-N-acetylmuramoyl-pentapeptide-transferase, found in Pseudomonas fluorescens (strain ATCC BAA-477 / NRRL B-23932 / Pf-5).